The sequence spans 219 residues: Large ribosomal subunit protein uL3 (219 aa).

Positions 134–153 are disordered; it reads RASHGNSRSHNVPGSIGMAQ. The residue at position 153 (Gln-153) is an N5-methylglutamine.

Belongs to the universal ribosomal protein uL3 family. In terms of assembly, part of the 50S ribosomal subunit. Forms a cluster with proteins L14 and L19. Methylated by PrmB.

Its function is as follows. One of the primary rRNA binding proteins, it binds directly near the 3'-end of the 23S rRNA, where it nucleates assembly of the 50S subunit. The chain is Large ribosomal subunit protein uL3 from Paraburkholderia phytofirmans (strain DSM 17436 / LMG 22146 / PsJN) (Burkholderia phytofirmans).